A 644-amino-acid chain; its full sequence is Translation factor guf1, mitochondrial (644 aa).

The transit peptide at 1–31 directs the protein to the mitochondrion; the sequence is MTLRRFSYTFQARILRGLQARPVFVLPSRSH. Positions 51–232 constitute a tr-type G domain; sequence VNIRNWAIIS…AIIQRVPHPI (182 aa). GTP contacts are provided by residues 60–67, 125–129, and 179–182; these read SHIDHGKS, DTPGH, and NKID.

The protein belongs to the TRAFAC class translation factor GTPase superfamily. Classic translation factor GTPase family. LepA subfamily.

It localises to the mitochondrion inner membrane. The enzyme catalyses GTP + H2O = GDP + phosphate + H(+). In terms of biological role, promotes mitochondrial protein synthesis. May act as a fidelity factor of the translation reaction, by catalyzing a one-codon backward translocation of tRNAs on improperly translocated ribosomes. Binds to mitochondrial ribosomes in a GTP-dependent manner. In Schizosaccharomyces japonicus (strain yFS275 / FY16936) (Fission yeast), this protein is Translation factor guf1, mitochondrial (guf1).